The following is an 833-amino-acid chain: Leucine--tRNA ligase (833 aa).

Positions 41-52 match the 'HIGH' region motif; the sequence is PYPSGAGLHVGH. The short motif at 610 to 614 is the 'KMSKS' region element; the sequence is KMSKS. Lysine 613 contributes to the ATP binding site.

Belongs to the class-I aminoacyl-tRNA synthetase family.

The protein localises to the cytoplasm. The catalysed reaction is tRNA(Leu) + L-leucine + ATP = L-leucyl-tRNA(Leu) + AMP + diphosphate. The polypeptide is Leucine--tRNA ligase (Streptococcus pyogenes serotype M28 (strain MGAS6180)).